A 145-amino-acid polypeptide reads, in one-letter code: UPF0735 ACT domain-containing protein CLH_2637 (145 aa).

One can recognise an ACT domain in the interval 69–144; sequence TFNLIVKDQT…YVEKIEFVAM (76 aa).

It belongs to the UPF0735 family.

In Clostridium botulinum (strain Alaska E43 / Type E3), this protein is UPF0735 ACT domain-containing protein CLH_2637.